The chain runs to 1748 residues: MSARAAAAKSTAMEETAIWEQHTVTLHRAPGFGFGIAISGGRDNPHFQSGETSIVISDVLKGGPAEGQLQENDRVAMVNGVSMDNVEHAFAVQQLRKSGKNAKITIRRKKKVQIPVSRPDPEPVSDNEEDSYDEEIHDPRSGRSGVVNRRSEKIWPRDRSASRERSLSPRSDRRSVASSQPAKPTKVTLVKSRKNEEYGLRLASHIFVKEISQDSLAARDGNIQEGDVVLKINGTVTENMSLTDAKTLIERSKGKLKMVVQRDERATLLNVPDLSDSIHSANASERDDISEIQSLASDHSGRSHDRPPRRSRSRSPDQRSEPSDHSRHSPQQPSNGSLRSRDEERISKPGAVSTPVKHADDHTPKTVEEVTVERNEKQTPSLPEPKPVYAQVGQPDVDLPVSPSDGVLPNSTHEDGILRPSMKLVKFRKGDSVGLRLAGGNDVGIFVAGVLEDSPAAKEGLEEGDQILRVNNVDFTNIIREEAVLFLLDLPKGEEVTILAQKKKDVYRRIVESDVGDSFYIRTHFEYEKESPYGLSFNKGEVFRVVDTLYNGKLGSWLAIRIGKNHKEVERGIIPNKNRAEQLASVQYTLPKTAGGDRADFWRFRGLRSSKRNLRKSREDLSAQPVQTKFPAYERVVLREAGFLRPVTIFGPIADVAREKLAREEPDIYQIAKSEPRDAGTDQRSSGIIRLHTIKQIIDQDKHALLDVTPNAVDRLNYAQWYPIVVFLNPDSKQGVKTMRMRLCPESRKSARKLYERSHKLRKNNHHLFTTTINLNSMNDGWYGALKEAIQQQQNQLVWVSEGKADGATSDDLDLHDDRLSYLSAPGSEYSMYSTDSRHTSDYEDTDTEGGAYTDQELDETLNDEVGTPPESAITRSSEPVREDSSGMHHENQTYPPYSPQAQPQPIHRIDSPGFKPASQQKAEASSPVPYLSPETNPASSTSAVNHNVNLTNVRLEEPTPAPSTSYSPQADSLRTPSTEAAHIMLRDQEPSLSSHVDPTKVYRKDPYPEEMMRQNHVLKQPAVSHPGHRPDKEPNLTYEPQLPYVEKQASRDLEQPTYRYESSSYTDQFSRNYEHRLRYEDRVPMYEEQWSYYDDKQPYPSRPPFDNQHSQDLDSRQHPEESSERGYFPRFEEPAPLSYDSRPRYEQAPRASALRHEEQPAPGYDTHGRLRPEAQPHPSAGPKPAESKQYFEQYSRSYEQVPPQGFTSRAGHFEPLHGAAAVPPLIPSSQHKPEALPSNTKPLPPPPTQTEEEEDPAMKPQSVLTRVKMFENKRSASLETKKDVNDTGSFKPPEVASKPSGAPIIGPKPTSQNQFSEHDKTLYRIPEPQKPQLKPPEDIVRSNHYDPEEDEEYYRKQLSYFDRRSFENKPPAHIAASHLSEPAKPAHSQNQSNFSSYSSKGKPPEADGVDRSFGEKRYEPIQATPPPPPLPSQYAQPSQPVTSASLHIHSKGAHGEGNSVSLDFQNSLVSKPDPPPSQNKPATFRPPNREDTAQAAFYPQKSFPDKAPVNGTEQTQKTVTPAYNRFTPKPYTSSARPFERKFESPKFNHNLLPSETAHKPDLSSKTPTSPKTLVKSHSLAQPPEFDSGVETFSIHAEKPKYQINNISTVPKAIPVSPSAVEEDEDEDGHTVVATARGIFNSNGGVLSSIETGVSIIIPQGAIPEGVEQEIYFKVCRDNSILPPLDKEKGETLLSPLVMCGPHGLKFLKPVELRLPHCDPKTWQNKCLPGDPNYLVGANCVSVLIDHF.

Residues 23-110 (TVTLHRAPGF…NAKITIRRKK (88 aa)) enclose the PDZ 1 domain. Residues 102–112 (AKITIRRKKKV) show a composition bias toward basic residues. The tract at residues 102 to 189 (AKITIRRKKK…QPAKPTKVTL (88 aa)) is disordered. The span at 123–136 (PVSDNEEDSYDEEI) shows a compositional bias: acidic residues. Ser125 is subject to Phosphoserine. Phosphotyrosine is present on Tyr132. Over residues 149 to 175 (RRSEKIWPRDRSASRERSLSPRSDRRS) the composition is skewed to basic and acidic residues. Phosphoserine occurs at positions 175, 178, and 179. At Thr185 the chain carries Phosphothreonine. One can recognise a PDZ 2 domain in the interval 186–264 (KVTLVKSRKN…KLKMVVQRDE (79 aa)). Residues Ser212 and Ser241 each carry the phosphoserine modification. Position 267 is a phosphothreonine (Thr267). Phosphoserine is present on residues Ser275, Ser277, Ser280, Ser284, Ser290, Ser294, Ser297, Ser300, Ser323, Ser329, Ser334, Ser337, and Ser353. The tract at residues 295 to 396 (LASDHSGRSH…PVYAQVGQPD (102 aa)) is disordered. A compositionally biased stretch (basic and acidic residues) spans 299–327 (HSGRSHDRPPRRSRSRSPDQRSEPSDHSR). Residues 329–338 (SPQQPSNGSL) show a composition bias toward polar residues. Thr354 bears the Phosphothreonine mark. Positions 357 to 377 (KHADDHTPKTVEEVTVERNEK) are enriched in basic and acidic residues. One can recognise a PDZ 3 domain in the interval 421 to 502 (SMKLVKFRKG…GEEVTILAQK (82 aa)). The region spanning 516-584 (GDSFYIRTHF…PNKNRAEQLA (69 aa)) is the SH3 domain. The Guanylate kinase-like domain maps to 598-779 (RADFWRFRGL…TTTINLNSMN (182 aa)). 2 positions are modified to phosphoserine: Ser617 and Ser622. The occludin (OCLN)-binding region stretch occupies residues 633-876 (YERVVLREAG…GTPPESAITR (244 aa)). Thr809 is modified (phosphothreonine). Phosphoserine is present on residues Ser810 and Ser821. Tyr822 carries the post-translational modification Phosphotyrosine. Ser824, Ser828, and Ser837 each carry phosphoserine. Disordered stretches follow at residues 825–1081 (APGS…LRYE) and 1095–1587 (DDKQ…PEFD). Residues Thr846, Thr848, Thr854, Thr861, and Thr868 each carry the phosphothreonine modification. The segment covering 879–892 (EPVREDSSGMHHEN) has biased composition (basic and acidic residues). Residues 893-906 (QTYPPYSPQAQPQP) show a composition bias toward low complexity. At Ser912 the chain carries Phosphoserine. Composition is skewed to polar residues over residues 934–953 (PETNPASSTSAVNHNVNLTN) and 963–979 (PSTSYSPQADSLRTPST). At Ser968 the chain carries Phosphoserine. Residues 998–1014 (DPTKVYRKDPYPEEMMR) are compositionally biased toward basic and acidic residues. Over residues 1061 to 1072 (YESSSYTDQFSR) the composition is skewed to polar residues. Phosphoserine is present on residues Ser1071, Ser1111, and Ser1139. Positions 1110-1125 (HSQDLDSRQHPEESSE) are enriched in basic and acidic residues. Residues Tyr1140 and Tyr1165 each carry the phosphotyrosine modification. The interval 1151 to 1371 (RASALRHEEQ…FDRRSFENKP (221 aa)) is actin-binding region (ABR). 2 stretches are compositionally biased toward basic and acidic residues: residues 1269-1286 (KMFENKRSASLETKKDVN) and 1336-1347 (PPEDIVRSNHYD). A Phosphotyrosine modification is found at Tyr1354. Phosphoserine is present on Ser1366. The segment covering 1389-1400 (SQNQSNFSSYSS) has biased composition (low complexity). Residues 1403–1420 (KPPEADGVDRSFGEKRYE) are compositionally biased toward basic and acidic residues. A Phosphoserine modification is found at Ser1413. 2 stretches are compositionally biased toward polar residues: residues 1459-1470 (NSVSLDFQNSLV) and 1512-1522 (GTEQTQKTVTP). Residues 1538 to 1547 (PFERKFESPK) show a composition bias toward basic and acidic residues. Phosphoserine occurs at positions 1545 and 1617. The ZU5 domain maps to 1634–1748 (ATARGIFNSN…NCVSVLIDHF (115 aa)).

The protein belongs to the MAGUK family. In terms of assembly, homodimer. Forms heterodimers TJP3. Forms a heterodimer (via PDZ2 domain) with TJP2/ZO2 (via PDZ2 domain). Interacts with OCLN, CALM, claudins, CGN/cingulin, CXADR, GJA12, GJD3 and UBN1. Interacts (via ZU5 domain) with CDC42BPB and MYZAP. Interacts (via PDZ domain) with GJA1. Interacts (via PDZ domains) with ANKRD2. Interacts with POPDC1 (via the C-terminus cytoplasmic tail). Interacts with HSPA4 and KIRREL1. Interacts with DLL1. Interacts with USP53 (via the C-terminal region). Interacts (via ABR region) with F-actin. Interacts with DNMBP (via C-terminal domain); required for the apical cell-cell junction localization of DNMBP. Interacts with SPEF1. Interacts (via N-terminus) with CTNNA1. Interacts with CLDN18. Interacts with CLDN16 (via TRV motif); this is a prerequisite for anchoring of CLDN16 at the tight junction. Interacts with PKP1; the interaction facilitates TJP1/ZO-1 localization to the plasma membrane. Interacts with PATJ (via PDZ1-6 domains); the interaction is required for attachment and extension of TJP1/ZO1 condensates along the apical cell interface. Post-translationally, phosphorylated at tyrosine redidues in response to epidermal growth factor (EGF). This response is dependent on an intact actin microfilament system. Dephosphorylated by PTPRJ. The alpha-containing isoform is found in most epithelial cell junctions. The short isoform is found both in endothelial cells and the highly specialized epithelial junctions of renal glomeruli and Sertoli cells of the seminiferous tubules.

The protein resides in the cell membrane. It is found in the cell junction. The protein localises to the tight junction. Its subcellular location is the gap junction. It localises to the cell projection. The protein resides in the podosome. In terms of biological role, TJP1, TJP2, and TJP3 are closely related scaffolding proteins that link tight junction (TJ) transmembrane proteins such as claudins, junctional adhesion molecules, and occludin to the actin cytoskeleton. Forms a multistranded TJP1/ZO1 condensate which elongates to form a tight junction belt, the belt is anchored at the apical cell membrane via interaction with PATJ. The tight junction acts to limit movement of substances through the paracellular space and as a boundary between the compositionally distinct apical and basolateral plasma membrane domains of epithelial and endothelial cells. Necessary for lumenogenesis, and particularly efficient epithelial polarization and barrier formation. Plays a role in the regulation of cell migration by targeting CDC42BPB to the leading edge of migrating cells. Plays an important role in podosome formation and associated function, thus regulating cell adhesion and matrix remodeling. With TJP2 and TJP3, participates in the junctional retention and stability of the transcription factor DBPA, but is not involved in its shuttling to the nucleus. May play a role in mediating cell morphology changes during ameloblast differentiation via its role in tight junctions. In Homo sapiens (Human), this protein is Tight junction protein 1.